A 157-amino-acid chain; its full sequence is S-ribosylhomocysteine lyase (157 aa).

Residues His-60, His-64, and Cys-127 each coordinate Fe cation.

This sequence belongs to the LuxS family. Homodimer. It depends on Fe cation as a cofactor.

It carries out the reaction S-(5-deoxy-D-ribos-5-yl)-L-homocysteine = (S)-4,5-dihydroxypentane-2,3-dione + L-homocysteine. Its function is as follows. Involved in the synthesis of autoinducer 2 (AI-2) which is secreted by bacteria and is used to communicate both the cell density and the metabolic potential of the environment. The regulation of gene expression in response to changes in cell density is called quorum sensing. Catalyzes the transformation of S-ribosylhomocysteine (RHC) to homocysteine (HC) and 4,5-dihydroxy-2,3-pentadione (DPD). The protein is S-ribosylhomocysteine lyase of Helicobacter acinonychis (strain Sheeba).